Reading from the N-terminus, the 360-residue chain is UDP-N-acetylglucosamine--N-acetylmuramyl-(pentapeptide) pyrophosphoryl-undecaprenol N-acetylglucosamine transferase (360 aa).

UDP-N-acetyl-alpha-D-glucosamine contacts are provided by residues 11–13, N120, R161, S188, and Q282; that span reads TGG.

It belongs to the glycosyltransferase 28 family. MurG subfamily.

Its subcellular location is the cell inner membrane. The catalysed reaction is di-trans,octa-cis-undecaprenyl diphospho-N-acetyl-alpha-D-muramoyl-L-alanyl-D-glutamyl-meso-2,6-diaminopimeloyl-D-alanyl-D-alanine + UDP-N-acetyl-alpha-D-glucosamine = di-trans,octa-cis-undecaprenyl diphospho-[N-acetyl-alpha-D-glucosaminyl-(1-&gt;4)]-N-acetyl-alpha-D-muramoyl-L-alanyl-D-glutamyl-meso-2,6-diaminopimeloyl-D-alanyl-D-alanine + UDP + H(+). It functions in the pathway cell wall biogenesis; peptidoglycan biosynthesis. Functionally, cell wall formation. Catalyzes the transfer of a GlcNAc subunit on undecaprenyl-pyrophosphoryl-MurNAc-pentapeptide (lipid intermediate I) to form undecaprenyl-pyrophosphoryl-MurNAc-(pentapeptide)GlcNAc (lipid intermediate II). The polypeptide is UDP-N-acetylglucosamine--N-acetylmuramyl-(pentapeptide) pyrophosphoryl-undecaprenol N-acetylglucosamine transferase (Synechococcus sp. (strain RCC307)).